Reading from the N-terminus, the 107-residue chain is U1-lycotoxin-Ls1b (107 aa).

Positions 1–20 are cleaved as a signal peptide; the sequence is MMKVLVVVALLPTLISYSSS. Positions 21 to 41 are excised as a propeptide; sequence EGIDDLEADELLSLMANEQTR. 4 disulfide bridges follow: C44–C59, C51–C68, C58–C86, and C70–C84.

This sequence belongs to the neurotoxin 19 (CSTX) family. 04 (U1-Lctx) subfamily. Expressed by the venom gland.

The protein localises to the secreted. In Lycosa singoriensis (Wolf spider), this protein is U1-lycotoxin-Ls1b.